We begin with the raw amino-acid sequence, 79 residues long: Large ribosomal subunit protein bL31 (79 aa).

It belongs to the bacterial ribosomal protein bL31 family. Type A subfamily. In terms of assembly, part of the 50S ribosomal subunit.

In terms of biological role, binds the 23S rRNA. This is Large ribosomal subunit protein bL31 from Trichormus variabilis (strain ATCC 29413 / PCC 7937) (Anabaena variabilis).